The primary structure comprises 105 residues: NADH-quinone oxidoreductase subunit K (105 aa).

3 helical membrane passes run 4–24, 28–48, and 66–86; these read LTHY…GVIV, IIVI…SLVA, and LSIF…ALIV.

It belongs to the complex I subunit 4L family. NDH-1 is composed of 14 different subunits. Subunits NuoA, H, J, K, L, M, N constitute the membrane sector of the complex.

Its subcellular location is the cell inner membrane. The catalysed reaction is a quinone + NADH + 5 H(+)(in) = a quinol + NAD(+) + 4 H(+)(out). Its function is as follows. NDH-1 shuttles electrons from NADH, via FMN and iron-sulfur (Fe-S) centers, to quinones in the respiratory chain. The immediate electron acceptor for the enzyme in this species is believed to be ubiquinone. Couples the redox reaction to proton translocation (for every two electrons transferred, four hydrogen ions are translocated across the cytoplasmic membrane), and thus conserves the redox energy in a proton gradient. This is NADH-quinone oxidoreductase subunit K from Akkermansia muciniphila (strain ATCC BAA-835 / DSM 22959 / JCM 33894 / BCRC 81048 / CCUG 64013 / CIP 107961 / Muc).